The primary structure comprises 380 residues: 1-deoxy-D-xylulose 5-phosphate reductoisomerase 2 (380 aa).

Residues S10, G11, S12, I13, G36, K37, N38, and N120 each coordinate NADPH. K121 contributes to the 1-deoxy-D-xylulose 5-phosphate binding site. E122 serves as a coordination point for NADPH. A Mn(2+)-binding site is contributed by D146. 1-deoxy-D-xylulose 5-phosphate contacts are provided by S147, E148, S172, and H195. Mn(2+) is bound at residue E148. G201 contributes to the NADPH binding site. 4 residues coordinate 1-deoxy-D-xylulose 5-phosphate: S208, N213, K214, and E217. E217 is a binding site for Mn(2+).

This sequence belongs to the DXR family. Requires Mg(2+) as cofactor. Mn(2+) serves as cofactor.

The enzyme catalyses 2-C-methyl-D-erythritol 4-phosphate + NADP(+) = 1-deoxy-D-xylulose 5-phosphate + NADPH + H(+). The protein operates within isoprenoid biosynthesis; isopentenyl diphosphate biosynthesis via DXP pathway; isopentenyl diphosphate from 1-deoxy-D-xylulose 5-phosphate: step 1/6. Its function is as follows. Catalyzes the NADPH-dependent rearrangement and reduction of 1-deoxy-D-xylulose-5-phosphate (DXP) to 2-C-methyl-D-erythritol 4-phosphate (MEP). The polypeptide is 1-deoxy-D-xylulose 5-phosphate reductoisomerase 2 (Bacillus thuringiensis subsp. konkukian (strain 97-27)).